A 296-amino-acid chain; its full sequence is Aldo-keto reductase MYCFIDRAFT_156381 (296 aa).

Asp-14 contacts NADP(+). The Proton donor role is filled by Tyr-19. A substrate-binding site is contributed by His-83. Residues 113–114 (CN), Gln-139, 168–178 (SPLAGGMLTDR), and Arg-191 each bind NADP(+). Substrate is bound at residue Tyr-201. Position 255–263 (255–263 (SSAEQLESN)) interacts with NADP(+).

This sequence belongs to the aldo/keto reductase family. Aldo/keto reductase 2 subfamily.

It functions in the pathway secondary metabolite biosynthesis. In terms of biological role, aldo-keto reductase; part of the gene cluster that mediates the biosynthesis of an emodin derivative that may be involved in black Sigatoka disease of banana. The pathway begins with the synthesis of atrochrysone thioester by the polyketide synthase PKS8-1. The atrochrysone carboxyl ACP thioesterase MYCFIDRAFT_190111 then breaks the thioester bond and releases the atrochrysone carboxylic acid from PKS8-1. The decarboxylase MYCFIDRAFT_34057 then catalyzes the concerted decarboxylation-elimination required to convert atochrysone carboxylic acid into emodin anthrone, which is further oxidized to emodin by the anthrone oxygenase MYCFIDRAFT_34418. The functions of the other tailoring enzymes as well as the final product of the cluster have still to be identified. In Pseudocercospora fijiensis (strain CIRAD86) (Black leaf streak disease fungus), this protein is Aldo-keto reductase MYCFIDRAFT_156381.